The chain runs to 186 residues: Elongation factor P (186 aa).

It belongs to the elongation factor P family.

It localises to the cytoplasm. Its pathway is protein biosynthesis; polypeptide chain elongation. In terms of biological role, involved in peptide bond synthesis. Stimulates efficient translation and peptide-bond synthesis on native or reconstituted 70S ribosomes in vitro. Probably functions indirectly by altering the affinity of the ribosome for aminoacyl-tRNA, thus increasing their reactivity as acceptors for peptidyl transferase. The polypeptide is Elongation factor P (Shewanella loihica (strain ATCC BAA-1088 / PV-4)).